The sequence spans 638 residues: Chaperone protein DnaK (638 aa).

Thr-198 carries the phosphothreonine; by autocatalysis modification. The interval 599–638 is disordered; the sequence is IYESQQAEGGAEGGPSGHHDDGIVDADYEEVKDDNTKKSA. Positions 621–630 are enriched in acidic residues; the sequence is IVDADYEEVK.

The protein belongs to the heat shock protein 70 family.

Acts as a chaperone. The protein is Chaperone protein DnaK of Allorhizobium ampelinum (strain ATCC BAA-846 / DSM 112012 / S4) (Agrobacterium vitis (strain S4)).